We begin with the raw amino-acid sequence, 439 residues long: Probable guanine deaminase (439 aa).

Zn(2+) contacts are provided by His-76 and His-78. Substrate contacts are provided by residues 78–81 (HYPQ), 203–204 (RF), 231–234 (HINE), and Asp-321. Zn(2+)-binding residues include His-231 and Asp-321.

It belongs to the metallo-dependent hydrolases superfamily. ATZ/TRZ family. Zn(2+) is required as a cofactor.

It carries out the reaction guanine + H2O + H(+) = xanthine + NH4(+). It functions in the pathway purine metabolism; guanine degradation; xanthine from guanine: step 1/1. Catalyzes the hydrolytic deamination of guanine, producing xanthine and ammonia. This chain is Probable guanine deaminase (guaD), found in Deinococcus radiodurans (strain ATCC 13939 / DSM 20539 / JCM 16871 / CCUG 27074 / LMG 4051 / NBRC 15346 / NCIMB 9279 / VKM B-1422 / R1).